Here is a 247-residue protein sequence, read N- to C-terminus: Carboxy-S-adenosyl-L-methionine synthase (247 aa).

Residues tyrosine 39, 64–66 (GCS), 89–90 (DN), 117–118 (DI), asparagine 132, and arginine 199 contribute to the S-adenosyl-L-methionine site.

It belongs to the class I-like SAM-binding methyltransferase superfamily. Cx-SAM synthase family. As to quaternary structure, homodimer.

It carries out the reaction prephenate + S-adenosyl-L-methionine = carboxy-S-adenosyl-L-methionine + 3-phenylpyruvate + H2O. Functionally, catalyzes the conversion of S-adenosyl-L-methionine (SAM) to carboxy-S-adenosyl-L-methionine (Cx-SAM). In Salmonella choleraesuis (strain SC-B67), this protein is Carboxy-S-adenosyl-L-methionine synthase.